We begin with the raw amino-acid sequence, 434 residues long: Cysteine proteinase 6 (434 aa).

A signal peptide spans 1 to 19 (MKVLSALCVLLVSVATAKQ). The propeptide at 20–113 (QLSELQYRNA…SEKVFGGVQA (94 aa)) is activation peptide. 2 disulfide bridges follow: Cys133–Cys178 and Cys169–Cys211. Cys136 is a catalytic residue. Residue Asn227 is glycosylated (N-linked (GlcNAc...) asparagine). A disulfide bridge links Cys269 with Cys416. The active site involves His276. The tract at residues 285–384 (SGSSGSQSQS…GGNSNSGDYP (100 aa)) is disordered. Residues 288–347 (SGSQSQSAGSQSQSSNNNWSESSQSQDSNSWSQSSQSQSSQDSNSWSQSSQSQGSNSFTG) are compositionally biased toward low complexity. Residue Asn305 is glycosylated (N-linked (GlcNAc...) asparagine). Over residues 348 to 358 (AGTGSGSGSVS) the composition is skewed to gly residues. Residues 359-381 (GSGSASGSSSFSGSSNGGNSNSG) are compositionally biased toward low complexity. Asn394 is a catalytic residue.

It belongs to the peptidase C1 family.

Its subcellular location is the lysosome. The chain is Cysteine proteinase 6 (cprF) from Dictyostelium discoideum (Social amoeba).